Reading from the N-terminus, the 430-residue chain is UDP-N-acetylmuramoylalanine--D-glutamate ligase (430 aa).

Position 105–111 (105–111 (GSNGKTT)) interacts with ATP.

This sequence belongs to the MurCDEF family.

It localises to the cytoplasm. It carries out the reaction UDP-N-acetyl-alpha-D-muramoyl-L-alanine + D-glutamate + ATP = UDP-N-acetyl-alpha-D-muramoyl-L-alanyl-D-glutamate + ADP + phosphate + H(+). It functions in the pathway cell wall biogenesis; peptidoglycan biosynthesis. Cell wall formation. Catalyzes the addition of glutamate to the nucleotide precursor UDP-N-acetylmuramoyl-L-alanine (UMA). This chain is UDP-N-acetylmuramoylalanine--D-glutamate ligase, found in Pseudothermotoga lettingae (strain ATCC BAA-301 / DSM 14385 / NBRC 107922 / TMO) (Thermotoga lettingae).